Consider the following 282-residue polypeptide: Glycine betaine transport system permease protein OpuAB (282 aa).

Over 1–18 (MDRLPRIPLADIIDRFVD) the chain is Extracellular. The helical transmembrane segment at 19-39 (WITMTFGGFFDGIANGLAAFV) threads the bilayer. Residues 40–44 (NGIVT) are Cytoplasmic-facing. Residues 45–65 (GLGFIPSILLTIIFAALAWWI) form a helical membrane-spanning segment. At 66–69 (STRG) the chain is on the extracellular side. The chain crosses the membrane as a helical span at residues 70–90 (IALFTLIGFLLIDYLGYWDPM). One can recognise an ABC transmembrane type-1 domain in the interval 90 to 269 (MLQTLALVLT…IVAITLDRIT (180 aa)). Residues 91-93 (LQT) are Cytoplasmic-facing. The helical transmembrane segment at 94–114 (LALVLTSVIISIVVGVPIGIW) threads the bilayer. The Extracellular segment spans residues 115–137 (ASQKETVRRIVTPILDLMQTMPA). Residues 138-158 (FVYLLPAIFFFNIGVVPGVVA) form a helical membrane-spanning segment. Topologically, residues 159 to 215 (SVIFAMPPTIRMTVLGIKQVPADLIEATEAFGSTTAQRLFKVQLPLATKTILAGINQ) are cytoplasmic. A helical transmembrane segment spans residues 216–236 (SIMLALSMVVIAAMVGAPGLG). Topologically, residues 237–242 (SEVYSA) are extracellular. The chain crosses the membrane as a helical span at residues 243–263 (VTQLKTGVGVEAGIAIVIVAI). At 264–282 (TLDRITQNIKVKKKSRGNA) the chain is on the cytoplasmic side.

Belongs to the binding-protein-dependent transport system permease family. CysTW subfamily. The complex is composed of two ATP-binding proteins (OpuAA), two transmembrane proteins (OpuAB) and a solute-binding protein (OpuAC).

The protein resides in the cell membrane. Functionally, involved in a multicomponent binding-protein-dependent transport system for glycine betaine; probably responsible for the translocation of the substrate across the membrane. In Bacillus subtilis (strain 168), this protein is Glycine betaine transport system permease protein OpuAB (opuAB).